Consider the following 1071-residue polypeptide: ATP-dependent helicase/deoxyribonuclease subunit B (1071 aa).

The protein belongs to the helicase family. AddB/RexB type 2 subfamily. Heterodimer of AddA and RexB. Mg(2+) is required as a cofactor.

In terms of biological role, the heterodimer acts as both an ATP-dependent DNA helicase and an ATP-dependent, dual-direction single-stranded exonuclease. Recognizes the chi site generating a DNA molecule suitable for the initiation of homologous recombination. This subunit has 5' -&gt; 3' nuclease activity but not helicase activity. The sequence is that of ATP-dependent helicase/deoxyribonuclease subunit B from Streptococcus pyogenes serotype M1.